The chain runs to 419 residues: L-rhamnose isomerase (419 aa).

Mn(2+) contacts are provided by His-262, Asp-294, and Asp-296.

This sequence belongs to the rhamnose isomerase family. Homotetramer. Mn(2+) serves as cofactor.

The protein localises to the cytoplasm. It catalyses the reaction L-rhamnopyranose = L-rhamnulose. The protein operates within carbohydrate degradation; L-rhamnose degradation; glycerone phosphate from L-rhamnose: step 1/3. Functionally, catalyzes the interconversion of L-rhamnose and L-rhamnulose. The polypeptide is L-rhamnose isomerase (Escherichia coli (strain 55989 / EAEC)).